The chain runs to 243 residues: DNA repair protein RecO (243 aa).

The protein belongs to the RecO family.

Its function is as follows. Involved in DNA repair and RecF pathway recombination. This Vibrio vulnificus (strain CMCP6) protein is DNA repair protein RecO.